The sequence spans 315 residues: B3 domain-containing protein At1g05920 (315 aa).

The tract at residues 24–129 (MISRDNQKKT…PQVASVPKSV (106 aa)) is disordered. 3 stretches are compositionally biased toward basic and acidic residues: residues 39-51 (VREEKGKRREEMI), 66-83 (KEGKGKRREEMISRDNRT), and 100-114 (FDHVPRGTREPHAYL). The segment at residues 204–306 (INTVIQNDFL…ILCFALVPPT (103 aa)) is a DNA-binding region (TF-B3).

It localises to the nucleus. This Arabidopsis thaliana (Mouse-ear cress) protein is B3 domain-containing protein At1g05920.